The primary structure comprises 110 residues: Large ribosomal subunit protein uL22 (110 aa).

This sequence belongs to the universal ribosomal protein uL22 family. In terms of assembly, part of the 50S ribosomal subunit.

This protein binds specifically to 23S rRNA; its binding is stimulated by other ribosomal proteins, e.g. L4, L17, and L20. It is important during the early stages of 50S assembly. It makes multiple contacts with different domains of the 23S rRNA in the assembled 50S subunit and ribosome. Functionally, the globular domain of the protein is located near the polypeptide exit tunnel on the outside of the subunit, while an extended beta-hairpin is found that lines the wall of the exit tunnel in the center of the 70S ribosome. The chain is Large ribosomal subunit protein uL22 from Syntrophus aciditrophicus (strain SB).